A 426-amino-acid chain; its full sequence is Growth-regulating factor 9 (426 aa).

Residues 92–127 enclose the QLQ domain; sequence PFTPSQWMELEHQALIYKYLNAKAPIPSSLLISISK. In terms of domain architecture, WRC spans 151–195; sequence DPEPGRCRRTDGKKWRCSKEAMADHKYCERHINRNRHRSRKPVEN. 2 short sequence motifs (bipartite nuclear localization signal) span residues 156 to 166 and 184 to 191; these read RCRRTDGKKWR and RNRHRSRK. Positions 184–222 are disordered; sequence RNRHRSRKPVENQSRKTVKETPCAGSLPSSVGQGSFKKA. Positions 191–202 are enriched in basic and acidic residues; sequence KPVENQSRKTVK.

Belongs to the GRF family.

The protein resides in the nucleus. Its function is as follows. Transcription activator that plays a regulatory role in gibberellin-induced stem elongation. In Oryza sativa subsp. japonica (Rice), this protein is Growth-regulating factor 9 (GRF9).